A 37-amino-acid chain; its full sequence is Cytochrome b6-f complex subunit 5 (37 aa).

The chain crosses the membrane as a helical span at residues 5 to 25 (LLSGIVLGMITVSALGLFVAA).

This sequence belongs to the PetG family. In terms of assembly, the 4 large subunits of the cytochrome b6-f complex are cytochrome b6, subunit IV (17 kDa polypeptide, PetD), cytochrome f and the Rieske protein, while the 4 small subunits are PetG, PetL, PetM and PetN. The complex functions as a dimer.

The protein localises to the plastid. Its subcellular location is the chloroplast thylakoid membrane. Functionally, component of the cytochrome b6-f complex, which mediates electron transfer between photosystem II (PSII) and photosystem I (PSI), cyclic electron flow around PSI, and state transitions. PetG is required for either the stability or assembly of the cytochrome b6-f complex. The chain is Cytochrome b6-f complex subunit 5 from Trieres chinensis (Marine centric diatom).